A 433-amino-acid chain; its full sequence is 3-phosphoshikimate 1-carboxyvinyltransferase (433 aa).

3-phosphoshikimate is bound by residues lysine 22, serine 23, and arginine 27. Lysine 22 contacts phosphoenolpyruvate. Positions 95 and 123 each coordinate phosphoenolpyruvate. The 3-phosphoshikimate site is built by serine 166, glutamine 168, aspartate 314, and lysine 341. Residue glutamine 168 coordinates phosphoenolpyruvate. The active-site Proton acceptor is the aspartate 314. Phosphoenolpyruvate-binding residues include arginine 345 and arginine 386.

This sequence belongs to the EPSP synthase family. Monomer.

The protein localises to the cytoplasm. It catalyses the reaction 3-phosphoshikimate + phosphoenolpyruvate = 5-O-(1-carboxyvinyl)-3-phosphoshikimate + phosphate. The protein operates within metabolic intermediate biosynthesis; chorismate biosynthesis; chorismate from D-erythrose 4-phosphate and phosphoenolpyruvate: step 6/7. Catalyzes the transfer of the enolpyruvyl moiety of phosphoenolpyruvate (PEP) to the 5-hydroxyl of shikimate-3-phosphate (S3P) to produce enolpyruvyl shikimate-3-phosphate and inorganic phosphate. The chain is 3-phosphoshikimate 1-carboxyvinyltransferase from Acidithiobacillus ferrooxidans (strain ATCC 23270 / DSM 14882 / CIP 104768 / NCIMB 8455) (Ferrobacillus ferrooxidans (strain ATCC 23270)).